We begin with the raw amino-acid sequence, 154 residues long: ORF3b protein (154 aa).

Residues leucine 80–lysine 138 form a mitochondrial targeting signal region. Positions cysteine 134 to arginine 154 are nucleolar targeting. A Bipartite nuclear localization signal motif is present at residues lysine 135–valine 153.

In terms of assembly, interacts with host RUNX1 isoform b.

Its subcellular location is the host nucleus. It is found in the host nucleolus. The protein localises to the host mitochondrion. Induces host cell G0/G1 arrest and apoptosis. The polypeptide is ORF3b protein (Homo sapiens (Human)).